The sequence spans 272 residues: Phosphate import ATP-binding protein PstB (272 aa).

The 242-residue stretch at 26–267 (LDIKNLDLYY…PSEKQTEDYI (242 aa)) folds into the ABC transporter domain. Position 58–65 (58–65 (GPSGCGKS)) interacts with ATP.

This sequence belongs to the ABC transporter superfamily. Phosphate importer (TC 3.A.1.7) family. As to quaternary structure, the complex is composed of two ATP-binding proteins (PstB), two transmembrane proteins (PstC and PstA) and a solute-binding protein (PstS).

It localises to the cell inner membrane. The catalysed reaction is phosphate(out) + ATP + H2O = ADP + 2 phosphate(in) + H(+). Part of the ABC transporter complex PstSACB involved in phosphate import. Responsible for energy coupling to the transport system. This chain is Phosphate import ATP-binding protein PstB, found in Idiomarina loihiensis (strain ATCC BAA-735 / DSM 15497 / L2-TR).